The chain runs to 365 residues: Palmitoyltransferase ZDHHC20 (365 aa).

The Cytoplasmic portion of the chain corresponds to 1 to 14 (MAPCTLWRCCQRTV). Residues 15–35 (GWVPVLFITFVVVWSYYAYVV) traverse the membrane as a helical segment. The Lumenal segment spans residues 36 to 53 (ELCVFTLSGNGENGKAVV). Residues 54–74 (YLVAFHLFFVMFVWSYWMTIF) form a helical membrane-spanning segment. Residues 75 to 169 (TSPASPSKEF…NNCVGFSNYK (95 aa)) are Cytoplasmic-facing. One can recognise a DHHC domain in the interval 126–176 (RYCERCQLIKPDRAHHCSACDMCILKMDHHCPWVNNCVGFSNYKFFLLFLF). The Zn(2+) site is built by Cys-128 and Cys-131. Substrate is bound by residues Lys-135 and 140–143 (HHCS). His-141, Cys-142, Cys-145, Cys-148, and His-155 together coordinate Zn(2+). The active-site S-palmitoyl cysteine intermediate is Cys-156. Cys-162 serves as a coordination point for Zn(2+). The chain crosses the membrane as a helical span at residues 170–190 (FFLLFLFYSLLYCLFVATTVL). Topologically, residues 191 to 207 (QYFIKFWTNELTDTRAK) are lumenal. Residues 208 to 231 (FHVLFLFFVSTMFFISVLSLLSYH) form a helical membrane-spanning segment. At 232 to 365 (CWLVGKNRTT…NNHVTVAIEN (134 aa)) the chain is on the cytoplasmic side. Positions 301–365 (PEQASVSNQS…NNHVTVAIEN (65 aa)) are disordered. Positions 302 to 321 (EQASVSNQSESARSIGSNQP) are enriched in polar residues. Phosphoserine occurs at positions 305 and 330.

Belongs to the DHHC palmitoyltransferase family. In terms of processing, autopalmitoylated (in vitro).

It localises to the golgi apparatus membrane. The protein resides in the cell membrane. It is found in the cytoplasm. Its subcellular location is the perinuclear region. The protein localises to the endoplasmic reticulum membrane. It localises to the endoplasmic reticulum-Golgi intermediate compartment membrane. The enzyme catalyses L-cysteinyl-[protein] + hexadecanoyl-CoA = S-hexadecanoyl-L-cysteinyl-[protein] + CoA. It carries out the reaction L-cysteinyl-[protein] + tetradecanoyl-CoA = S-tetradecanoyl-L-cysteinyl-[protein] + CoA. The catalysed reaction is L-cysteinyl-[protein] + octadecanoyl-CoA = S-octadecanoyl-L-cysteinyl-[protein] + CoA. Its function is as follows. Palmitoyltransferase that could catalyze the addition of palmitate onto various protein substrates. Catalyzes palmitoylation of Cys residues in the cytoplasmic C-terminus of EGFR, and modulates the duration of EGFR signaling by modulating palmitoylation-dependent EGFR internalization and degradation. Has a preference for acyl-CoA with C16 fatty acid chains. Can also utilize acyl-CoA with C14 and C18 fatty acid chains. May palmitoylate CALHM1 subunit of gustatory voltage-gated ion channels and modulate channel gating and kinetics. In Bos taurus (Bovine), this protein is Palmitoyltransferase ZDHHC20.